We begin with the raw amino-acid sequence, 521 residues long: Cytochrome P450 1A1 (521 aa).

Substrate is bound at residue Phe-229. Cys-463 is a binding site for heme.

Belongs to the cytochrome P450 family. It depends on heme as a cofactor.

Its subcellular location is the endoplasmic reticulum membrane. It localises to the microsome membrane. The enzyme catalyses an organic molecule + reduced [NADPH--hemoprotein reductase] + O2 = an alcohol + oxidized [NADPH--hemoprotein reductase] + H2O + H(+). In terms of biological role, cytochromes P450 are a group of heme-thiolate monooxygenases. They oxidize a variety of structurally unrelated compounds, including steroids, fatty acids, and xenobiotics. This chain is Cytochrome P450 1A1 (cyp1a1), found in Oryzias latipes (Japanese rice fish).